A 208-amino-acid polypeptide reads, in one-letter code: Small ribosomal subunit protein uS4 (208 aa).

Residues 98-159 (RRLDNVAYRL…KSRKVAAISE (62 aa)) enclose the S4 RNA-binding domain.

Belongs to the universal ribosomal protein uS4 family. In terms of assembly, part of the 30S ribosomal subunit. Contacts protein S5. The interaction surface between S4 and S5 is involved in control of translational fidelity.

Functionally, one of the primary rRNA binding proteins, it binds directly to 16S rRNA where it nucleates assembly of the body of the 30S subunit. In terms of biological role, with S5 and S12 plays an important role in translational accuracy. The sequence is that of Small ribosomal subunit protein uS4 from Geobacter sp. (strain M21).